The chain runs to 88 residues: Phosphocarrier protein HPr (88 aa).

Residues 1 to 88 enclose the HPr domain; it reads MEKKEFHIVA…ETLQKEGLAE (88 aa). The Pros-phosphohistidine intermediate role is filled by His-15. Ser-46 is subject to Phosphoserine; by HPrK/P.

It belongs to the HPr family. As to quaternary structure, monomer.

Its subcellular location is the cytoplasm. Phosphorylation on Ser-46 inhibits the phosphoryl transfer from enzyme I to HPr. Its function is as follows. General (non sugar-specific) component of the phosphoenolpyruvate-dependent sugar phosphotransferase system (sugar PTS). This major carbohydrate active-transport system catalyzes the phosphorylation of incoming sugar substrates concomitantly with their translocation across the cell membrane. The phosphoryl group from phosphoenolpyruvate (PEP) is transferred to the phosphoryl carrier protein HPr by enzyme I. Phospho-HPr then transfers it to the PTS EIIA domain. Functionally, P-Ser-HPr interacts with the catabolite control protein A (CcpA), forming a complex that binds to DNA at the catabolite response elements cre, operator sites preceding a large number of catabolite-regulated genes. Thus, P-Ser-HPr is a corepressor in carbon catabolite repression (CCR), a mechanism that allows bacteria to coordinate and optimize the utilization of available carbon sources. P-Ser-HPr also plays a role in inducer exclusion, in which it probably interacts with several non-PTS permeases and inhibits their transport activity. The protein is Phosphocarrier protein HPr (ptsH) of Enterococcus faecalis (strain ATCC 700802 / V583).